Reading from the N-terminus, the 93-residue chain is Exodeoxyribonuclease 7 small subunit (93 aa).

The span at 61–75 shows a compositional bias: basic and acidic residues; that stretch reads IDDNGDEKVYEKQTD. The segment at 61 to 93 is disordered; the sequence is IDDNGDEKVYEKQTDDPSNNGGGNRGFGSADEQ.

This sequence belongs to the XseB family. Heterooligomer composed of large and small subunits.

Its subcellular location is the cytoplasm. The enzyme catalyses Exonucleolytic cleavage in either 5'- to 3'- or 3'- to 5'-direction to yield nucleoside 5'-phosphates.. Functionally, bidirectionally degrades single-stranded DNA into large acid-insoluble oligonucleotides, which are then degraded further into small acid-soluble oligonucleotides. In Limosilactobacillus reuteri (strain DSM 20016) (Lactobacillus reuteri), this protein is Exodeoxyribonuclease 7 small subunit.